A 259-amino-acid chain; its full sequence is UPF0246 protein MADE_1015435 (259 aa).

It belongs to the UPF0246 family.

This chain is UPF0246 protein MADE_1015435, found in Alteromonas mediterranea (strain DSM 17117 / CIP 110805 / LMG 28347 / Deep ecotype).